Consider the following 202-residue polypeptide: LexA repressor (202 aa).

The segment at residues 28–48 (RAEIAQQLGFRSPNAAEEHLK) is a DNA-binding region (H-T-H motif). Residues S119 and K156 each act as for autocatalytic cleavage activity in the active site.

Belongs to the peptidase S24 family. As to quaternary structure, homodimer.

The enzyme catalyses Hydrolysis of Ala-|-Gly bond in repressor LexA.. In terms of biological role, represses a number of genes involved in the response to DNA damage (SOS response), including recA and lexA. Binds to the 16 bp palindromic sequence 5'-CTGTATATATATACAG-3'. In the presence of single-stranded DNA, RecA interacts with LexA causing an autocatalytic cleavage which disrupts the DNA-binding part of LexA, leading to derepression of the SOS regulon and eventually DNA repair. The chain is LexA repressor from Pectobacterium carotovorum subsp. carotovorum (Erwinia carotovora subsp. carotovora).